The primary structure comprises 150 residues: D-aminoacyl-tRNA deacylase (150 aa).

A Gly-cisPro motif, important for rejection of L-amino acids motif is present at residues 136–137; that stretch reads GP.

It belongs to the DTD family. Homodimer.

Its subcellular location is the cytoplasm. The enzyme catalyses glycyl-tRNA(Ala) + H2O = tRNA(Ala) + glycine + H(+). It catalyses the reaction a D-aminoacyl-tRNA + H2O = a tRNA + a D-alpha-amino acid + H(+). In terms of biological role, an aminoacyl-tRNA editing enzyme that deacylates mischarged D-aminoacyl-tRNAs. Also deacylates mischarged glycyl-tRNA(Ala), protecting cells against glycine mischarging by AlaRS. Acts via tRNA-based rather than protein-based catalysis; rejects L-amino acids rather than detecting D-amino acids in the active site. By recycling D-aminoacyl-tRNA to D-amino acids and free tRNA molecules, this enzyme counteracts the toxicity associated with the formation of D-aminoacyl-tRNA entities in vivo and helps enforce protein L-homochirality. This chain is D-aminoacyl-tRNA deacylase, found in Macrococcus caseolyticus (strain JCSC5402) (Macrococcoides caseolyticum).